Reading from the N-terminus, the 529-residue chain is Glutamyl-tRNA(Gln) amidotransferase subunit B-2, chloroplastic/mitochondrial (529 aa).

Residues 17 to 61 (STRVSLPRGSIPPPPTSSSSSSSSSREGRRPRFFSTTTTSAERPV) form a disordered region.

It belongs to the GatB/GatE family. GatB subfamily. In terms of assembly, subunit of the heterotrimeric GatCAB amidotransferase (AdT) complex, composed of A, B and C subunits.

It localises to the mitochondrion. Its subcellular location is the plastid. The protein resides in the chloroplast. It catalyses the reaction L-glutamyl-tRNA(Gln) + L-glutamine + ATP + H2O = L-glutaminyl-tRNA(Gln) + L-glutamate + ADP + phosphate + H(+). In terms of biological role, allows the formation of correctly charged Gln-tRNA(Gln) through the transamidation of misacylated Glu-tRNA(Gln) in chloroplasts and mitochondria. The reaction takes place in the presence of glutamine and ATP through an activated gamma-phospho-Glu-tRNA(Gln). The sequence is that of Glutamyl-tRNA(Gln) amidotransferase subunit B-2, chloroplastic/mitochondrial from Micromonas commoda (strain RCC299 / NOUM17 / CCMP2709) (Picoplanktonic green alga).